The primary structure comprises 54 residues: Ovomucoid (54 aa).

Residues 4-54 (VDCSEYPKPVCSLEYMPLCGSDSQTYSNECNFCNAVVDSNGTLTLSHFGKC) enclose the Kazal-like domain. Cystine bridges form between C6–C36, C14–C33, and C22–C54. N-linked (GlcNAc...) asparagine glycosylation is present at N43.

The protein resides in the secreted. This is Ovomucoid from Caracara plancus (Southern caracara).